The following is a 169-amino-acid chain: Protein-export protein SecB (169 aa).

Belongs to the SecB family. In terms of assembly, homotetramer, a dimer of dimers. One homotetramer interacts with 1 SecA dimer.

It is found in the cytoplasm. One of the proteins required for the normal export of preproteins out of the cell cytoplasm. It is a molecular chaperone that binds to a subset of precursor proteins, maintaining them in a translocation-competent state. It also specifically binds to its receptor SecA. This Alteromonas mediterranea (strain DSM 17117 / CIP 110805 / LMG 28347 / Deep ecotype) protein is Protein-export protein SecB.